The primary structure comprises 219 residues: Uracil-DNA glycosylase (219 aa).

D61 serves as the catalytic Proton acceptor.

It belongs to the uracil-DNA glycosylase (UDG) superfamily. UNG family.

The protein resides in the cytoplasm. The catalysed reaction is Hydrolyzes single-stranded DNA or mismatched double-stranded DNA and polynucleotides, releasing free uracil.. Its function is as follows. Excises uracil residues from the DNA which can arise as a result of misincorporation of dUMP residues by DNA polymerase or due to deamination of cytosine. This is Uracil-DNA glycosylase from Neisseria gonorrhoeae (strain ATCC 700825 / FA 1090).